The primary structure comprises 421 residues: Putative nickel insertion protein (421 aa).

This sequence belongs to the LarC family.

The chain is Putative nickel insertion protein from Gloeobacter violaceus (strain ATCC 29082 / PCC 7421).